The primary structure comprises 549 residues: Cation/acetate symporter ActP (549 aa).

The next 13 helical transmembrane spans lie at 33–53, 77–97, 103–123, 148–168, 183–203, 206–226, 262–282, 303–323, 355–375, 404–424, 428–448, 464–484, and 493–513; these read WQAI…TYWA, LAIA…ALVF, GLIY…LIAE, ILSA…QMVG, IAVV…GMLA, WVQI…AFMV, ISAL…PHIL, GFMG…IMLV, LFLG…VAGL, VSKI…VLFE, IAFM…PIIL, GGWL…TIWV, and IFPY…GIWF.

The protein belongs to the sodium:solute symporter (SSF) (TC 2.A.21) family.

The protein localises to the cell inner membrane. Its function is as follows. Transports acetate. The polypeptide is Cation/acetate symporter ActP (Citrobacter koseri (strain ATCC BAA-895 / CDC 4225-83 / SGSC4696)).